Here is a 246-residue protein sequence, read N- to C-terminus: 3-deoxy-manno-octulosonate cytidylyltransferase (246 aa).

This sequence belongs to the KdsB family.

It localises to the cytoplasm. The catalysed reaction is 3-deoxy-alpha-D-manno-oct-2-ulosonate + CTP = CMP-3-deoxy-beta-D-manno-octulosonate + diphosphate. It participates in nucleotide-sugar biosynthesis; CMP-3-deoxy-D-manno-octulosonate biosynthesis; CMP-3-deoxy-D-manno-octulosonate from 3-deoxy-D-manno-octulosonate and CTP: step 1/1. It functions in the pathway bacterial outer membrane biogenesis; lipopolysaccharide biosynthesis. Functionally, activates KDO (a required 8-carbon sugar) for incorporation into bacterial lipopolysaccharide in Gram-negative bacteria. In Leptospira biflexa serovar Patoc (strain Patoc 1 / Ames), this protein is 3-deoxy-manno-octulosonate cytidylyltransferase.